The chain runs to 691 residues: Elongation factor G (691 aa).

Residues 8–282 form the tr-type G domain; the sequence is ERVRNIGIAA…AVVDYLPAPV (275 aa). Residues 17–24, 81–85, and 135–138 each bind GTP; these read AHIDAGKT, DTPGH, and NKMD.

Belongs to the TRAFAC class translation factor GTPase superfamily. Classic translation factor GTPase family. EF-G/EF-2 subfamily.

It localises to the cytoplasm. Its function is as follows. Catalyzes the GTP-dependent ribosomal translocation step during translation elongation. During this step, the ribosome changes from the pre-translocational (PRE) to the post-translocational (POST) state as the newly formed A-site-bound peptidyl-tRNA and P-site-bound deacylated tRNA move to the P and E sites, respectively. Catalyzes the coordinated movement of the two tRNA molecules, the mRNA and conformational changes in the ribosome. The polypeptide is Elongation factor G (Prochlorococcus marinus (strain MIT 9313)).